Reading from the N-terminus, the 65-residue chain is Large ribosomal subunit protein bL35 (65 aa).

The protein belongs to the bacterial ribosomal protein bL35 family.

The sequence is that of Large ribosomal subunit protein bL35 from Blochmanniella pennsylvanica (strain BPEN).